We begin with the raw amino-acid sequence, 182 residues long: Adenine phosphoribosyltransferase (182 aa).

The protein belongs to the purine/pyrimidine phosphoribosyltransferase family. As to quaternary structure, homodimer.

The protein localises to the cytoplasm. The enzyme catalyses AMP + diphosphate = 5-phospho-alpha-D-ribose 1-diphosphate + adenine. The protein operates within purine metabolism; AMP biosynthesis via salvage pathway; AMP from adenine: step 1/1. In terms of biological role, catalyzes a salvage reaction resulting in the formation of AMP, that is energically less costly than de novo synthesis. This is Adenine phosphoribosyltransferase from Saccharopolyspora erythraea (strain ATCC 11635 / DSM 40517 / JCM 4748 / NBRC 13426 / NCIMB 8594 / NRRL 2338).